Reading from the N-terminus, the 255-residue chain is Staphylococcal secretory antigen ssaA1 (255 aa).

The first 26 residues, 1–26 (MKKIVTATIATAGLATIAFAGHDAQA), serve as a signal peptide directing secretion. 3 tandem repeats follow at residues 75-78 (YNNY), 88-91 (YNNY), and 98-101 (YNNY). The 3 X 4 AA repeats of Y-N-N-Y stretch occupies residues 75–101 (YNNYNTYSYNNASYNNYYNHSYQYNNY). Positions 134–255 (AAPSSNGRSI…NQAGSYNFIH (122 aa)) constitute a Peptidase C51 domain.

The protein localises to the secreted. Not known; immunogenic protein. The sequence is that of Staphylococcal secretory antigen ssaA1 (ssaA1) from Staphylococcus aureus (strain MW2).